The primary structure comprises 292 residues: Ribosomal protein L11 methyltransferase (292 aa).

Residues Thr144, Gly165, Asp187, and Asn229 each coordinate S-adenosyl-L-methionine.

This sequence belongs to the methyltransferase superfamily. PrmA family.

It localises to the cytoplasm. The enzyme catalyses L-lysyl-[protein] + 3 S-adenosyl-L-methionine = N(6),N(6),N(6)-trimethyl-L-lysyl-[protein] + 3 S-adenosyl-L-homocysteine + 3 H(+). Functionally, methylates ribosomal protein L11. This chain is Ribosomal protein L11 methyltransferase, found in Pseudomonas putida (strain W619).